Consider the following 148-residue polypeptide: Snaclec 8 (148 aa).

Residues 1–23 (MGRFIFVSFSLLVVFFSLSGTEA) form the signal peptide. The C-type lectin domain maps to 34-148 (YDQNCYKAFE…DTQFRLQEPG (115 aa)).

Belongs to the snaclec family. In terms of assembly, heterodimer; disulfide-linked. Contains disulfide bonds. Expressed by the venom gland.

It is found in the secreted. Interferes with one step of hemostasis (modulation of platelet aggregation, or coagulation cascade, for example). This chain is Snaclec 8, found in Echis carinatus sochureki (Saw-scaled viper).